A 333-amino-acid polypeptide reads, in one-letter code: uncharacterized protein (333 aa).

A Fe/B12 periplasmic-binding domain is found at 45 to 318 (NVIVSDSMFI…EYVKIIHPKI (274 aa)).

This is an uncharacterized protein from Methanocaldococcus jannaschii (strain ATCC 43067 / DSM 2661 / JAL-1 / JCM 10045 / NBRC 100440) (Methanococcus jannaschii).